The following is a 457-amino-acid chain: Bifunctional protein GlmU (457 aa).

The segment at 1–229 (MYNCAIILAA…YEEIMGVNSR (229 aa)) is pyrophosphorylase. UDP-N-acetyl-alpha-D-glucosamine is bound by residues 8-11 (LAAG), Lys-22, Gln-73, and 78-79 (GT). Asp-103 contributes to the Mg(2+) binding site. 4 residues coordinate UDP-N-acetyl-alpha-D-glucosamine: Gly-140, Glu-155, Asn-170, and Asn-227. Asn-227 is a Mg(2+) binding site. The segment at 230–250 (VQLSEAEIVMRKRINHKHMVN) is linker. Positions 251–457 (GVTFIDCEST…WLDKKGLLKK (207 aa)) are N-acetyltransferase. UDP-N-acetyl-alpha-D-glucosamine-binding residues include Arg-332 and Lys-350. The active-site Proton acceptor is the His-362. Tyr-365 and Asn-376 together coordinate UDP-N-acetyl-alpha-D-glucosamine. Acetyl-CoA-binding positions include 385–386 (NY), Ala-422, and Arg-439.

The protein in the N-terminal section; belongs to the N-acetylglucosamine-1-phosphate uridyltransferase family. This sequence in the C-terminal section; belongs to the transferase hexapeptide repeat family. Homotrimer. It depends on Mg(2+) as a cofactor.

It is found in the cytoplasm. The catalysed reaction is alpha-D-glucosamine 1-phosphate + acetyl-CoA = N-acetyl-alpha-D-glucosamine 1-phosphate + CoA + H(+). The enzyme catalyses N-acetyl-alpha-D-glucosamine 1-phosphate + UTP + H(+) = UDP-N-acetyl-alpha-D-glucosamine + diphosphate. It participates in nucleotide-sugar biosynthesis; UDP-N-acetyl-alpha-D-glucosamine biosynthesis; N-acetyl-alpha-D-glucosamine 1-phosphate from alpha-D-glucosamine 6-phosphate (route II): step 2/2. The protein operates within nucleotide-sugar biosynthesis; UDP-N-acetyl-alpha-D-glucosamine biosynthesis; UDP-N-acetyl-alpha-D-glucosamine from N-acetyl-alpha-D-glucosamine 1-phosphate: step 1/1. Its pathway is bacterial outer membrane biogenesis; LPS lipid A biosynthesis. Catalyzes the last two sequential reactions in the de novo biosynthetic pathway for UDP-N-acetylglucosamine (UDP-GlcNAc). The C-terminal domain catalyzes the transfer of acetyl group from acetyl coenzyme A to glucosamine-1-phosphate (GlcN-1-P) to produce N-acetylglucosamine-1-phosphate (GlcNAc-1-P), which is converted into UDP-GlcNAc by the transfer of uridine 5-monophosphate (from uridine 5-triphosphate), a reaction catalyzed by the N-terminal domain. This Clostridium botulinum (strain Langeland / NCTC 10281 / Type F) protein is Bifunctional protein GlmU.